We begin with the raw amino-acid sequence, 260 residues long: 3'-5' ssDNA/RNA exonuclease TatD (260 aa).

Positions 92, 128, and 153 each coordinate a divalent metal cation.

It belongs to the metallo-dependent hydrolases superfamily. TatD-type hydrolase family. TatD subfamily. As to quaternary structure, monomer. Mg(2+) is required as a cofactor.

The protein resides in the cytoplasm. Functionally, 3'-5' exonuclease that prefers single-stranded DNA and RNA. May play a role in the H(2)O(2)-induced DNA damage repair. This Edwardsiella piscicida protein is 3'-5' ssDNA/RNA exonuclease TatD.